Here is a 716-residue protein sequence, read N- to C-terminus: Cytoplasmic polyadenylation element-binding protein 3 (716 aa).

Basic and acidic residues predominate over residues Met1–Lys11. 2 disordered regions span residues Met1 to Gly118 and Ala162 to Ala209. 2 stretches are compositionally biased toward low complexity: residues Gln13–Gln31 and Ser54–Ala63. Residues Pro91 to Pro100 are compositionally biased toward pro residues. A compositionally biased stretch (polar residues) spans Leu107–Gly118. Positions Gln169 to Ala186 are enriched in pro residues. Low complexity predominate over residues Gln187 to Ala209. 3 positions are modified to phosphoserine: Ser194, Ser197, and Ser291. Position 309 is an asymmetric dimethylarginine (Arg309). Residues Ser419 and Ser420 each carry the phosphoserine modification. 2 consecutive RRM domains span residues Arg459–Leu550 and Lys567–Leu649.

It belongs to the RRM CPEB family. In terms of assembly, following synaptic activity, aggregates to form amyloid-like oligomers. Aggregation requires an intact actin cytoskeleton. Interacts with STAT5B; this inhibits STAT5B-mediated transcriptional activation. Interacts with E3 ubiquitin-protein ligase NEURL1; this leads to monoubiquitination and activation of CPEB3. Interacts with CAPN2; this leads to cleavage of CPEB3. Interacts (via C-terminal RNA-binding region) with TOB1; TOB1 also binds CNOT7/CAF1 and recruits it to CPEB3 to form a ternary complex. Interacts with SUMO-conjugating enzyme UBC9. Interacts with IPO5; the interaction is enhanced in a RAN-regulated manner following neuronal stimulation and mediates CPEB3 nuclear import. Interacts with exportin XPO1/CRM1. In terms of processing, activated by NEURL1-mediated monoubiquitination, resulting in the growth of new dendritic spines and increased levels of GRIA1 and GRIA2. NEURL1-mediated monoubiquitination facilitates synaptic plasticity and hippocampal-dependent memory storage. Under basal unstimulated conditions when CPEB3 is mainly unaggregated, sumoylated and acts as a translational repressor. Following neuronal stimulation, becomes desumoylated and aggregated which is required for the translation of mRNA targets and for dendritic filopodia formation. Post-translationally, following neuronal stimulation, cleaved by CAPN2 which abolishes its translational repressor activity, leading to translation of CPEB3 target mRNAs. In terms of processing, phosphorylation is enhanced by neuronal stimulation. As to expression, highly expressed in brain (at protein level). In brain, expressed in the hippocampus, granule cells and interneurons of the cerebellum, and mitral cells of the olfactory bulb (at protein level). Detected in the spinal cord and in peripheral dorsal root ganglia (at protein level). In the retina, strongly expressed in the retinal ganglion layer and, to a lesser extent, in the inner margin of the inner nuclear layer with expression also detected in the inner and outer plexiform layers (at protein level). Highly expressed in brain and heart, less in liver, kidney, embryo, skeletal muscle, lung and ovary. Weakly expressed in granular cells of dentate gyrus and the pyramidal cells of CA3 and CA1 of the hippocampus.

Its subcellular location is the cytoplasm. The protein resides in the nucleus. It is found in the synapse. The protein localises to the cell projection. It localises to the dendrite. Its subcellular location is the postsynaptic density. Functionally, sequence-specific RNA-binding protein which acts as a translational repressor in the basal unstimulated state but, following neuronal stimulation, acts as a translational activator. In contrast to CPEB1, does not bind to the cytoplasmic polyadenylation element (CPE), a uridine-rich sequence element within the mRNA 3'-UTR, but binds to a U-rich loop within a stem-loop structure. Required for the consolidation and maintenance of hippocampal-based long term memory. In the basal state, binds to the mRNA 3'-UTR of the glutamate receptors GRIA1 and GRIA2 and negatively regulates their translation. Also represses the translation of DLG4, GRIN1 GRIN2A and GRIN2B. When activated, acts as a translational activator of GRIA1 and GRIA2. In the basal state, suppresses SUMO2 translation but activates it following neuronal stimulation. Binds to the 3'-UTR of TRPV1 mRNA and represses TRPV1 translation which is required to maintain normal thermoception. Binds actin mRNA, leading to actin translational repression in the basal state and to translational activation following neuronal stimulation. Negatively regulates target mRNA levels by binding to TOB1 which recruits CNOT7/CAF1 to a ternary complex and this leads to target mRNA deadenylation and decay. In addition to its role in translation, binds to and inhibits the transcriptional activation activity of STAT5B without affecting its dimerization or DNA-binding activity. This, in turn, represses transcription of the STAT5B target gene EGFR which has been shown to play a role in enhancing learning and memory performance. In contrast to CPEB1, CPEB2 and CPEB4, not required for cell cycle progression. The polypeptide is Cytoplasmic polyadenylation element-binding protein 3 (Cpeb3) (Mus musculus (Mouse)).